The primary structure comprises 394 residues: Peroxisomal membrane protein PEX25 (394 aa).

The span at 1-25 (MSQFGTTDIVSGSETPPYSGASYQD) shows a compositional bias: polar residues. The disordered stretch occupies residues 1–65 (MSQFGTTDIV…SRSDDEDSQA (65 aa)). The Cytoplasmic segment spans residues 1–366 (MSQFGTTDIV…LNLKTPKGTY (366 aa)). A compositionally biased stretch (basic and acidic residues) spans 51 to 65 (SHTESSRSDDEDSQA). A phosphoserine mark is found at serine 58, serine 63, and serine 289. Residues 367-383 (AVLSLGSGLTGLVKLWI) traverse the membrane as a helical segment. The Lumenal segment spans residues 384–394 (TTKRSLCSSKD).

Homooligomer. Interacts with PEX27 and PEX34.

It localises to the peroxisome membrane. Its function is as follows. Required for regulation of peroxisome size and maintenance. Has a role in the import of peroxisomal matrix proteins. Imports RHO1 into the peroxisome. Also promotes peroxisome division and biogenesis. This Saccharomyces cerevisiae (strain ATCC 204508 / S288c) (Baker's yeast) protein is Peroxisomal membrane protein PEX25 (PEX25).